We begin with the raw amino-acid sequence, 96 residues long: ATP-dependent Clp protease adapter protein ClpS (96 aa).

The protein belongs to the ClpS family. In terms of assembly, binds to the N-terminal domain of the chaperone ClpA.

In terms of biological role, involved in the modulation of the specificity of the ClpAP-mediated ATP-dependent protein degradation. This is ATP-dependent Clp protease adapter protein ClpS from Campylobacter jejuni subsp. jejuni serotype O:6 (strain 81116 / NCTC 11828).